Here is a 320-residue protein sequence, read N- to C-terminus: Pyrroline-5-carboxylate reductase 1, mitochondrial (320 aa).

N-acetylserine is present on serine 2. NADP(+) contacts are provided by residues 6–11 (IGAGQL) and serine 34. NADPH is bound by residues alanine 8, glutamine 10, leucine 11, serine 34, aspartate 36, asparagine 56, valine 70, lysine 71, and alanine 97. NADP(+) contacts are provided by residues asparagine 56, 69 to 72 (AVKP), and 95 to 97 (CAA). Residue glutamate 164 coordinates L-proline. Asparagine 230 contributes to the NADPH binding site. L-proline contacts are provided by alanine 237 and threonine 238. Serine 278 is subject to Phosphoserine. Positions 292 to 320 (LDSPPGTSLAPSGHSKLLPRSMAPAGKQD) are disordered.

Belongs to the pyrroline-5-carboxylate reductase family. As to quaternary structure, homodecamer; composed of 5 homodimers. Interacts with LTO1.

The protein resides in the mitochondrion. The catalysed reaction is L-proline + NADP(+) = (S)-1-pyrroline-5-carboxylate + NADPH + 2 H(+). The enzyme catalyses L-proline + NAD(+) = (S)-1-pyrroline-5-carboxylate + NADH + 2 H(+). It functions in the pathway amino-acid biosynthesis; L-proline biosynthesis; L-proline from L-glutamate 5-semialdehyde: step 1/1. Its function is as follows. Oxidoreductase that catalyzes the last step in proline biosynthesis, which corresponds to the reduction of pyrroline-5-carboxylate to L-proline using NAD(P)H. At physiologic concentrations, has higher specific activity in the presence of NADH. Involved in the cellular response to oxidative stress. In Bos taurus (Bovine), this protein is Pyrroline-5-carboxylate reductase 1, mitochondrial (PYCR1).